The following is a 128-amino-acid chain: Large ribosomal subunit protein eL22 (128 aa).

It belongs to the eukaryotic ribosomal protein eL22 family. Component of the large ribosomal subunit.

It is found in the cytoplasm. In terms of biological role, component of the large ribosomal subunit. The ribosome is a large ribonucleoprotein complex responsible for the synthesis of proteins in the cell. The chain is Large ribosomal subunit protein eL22 (rpl22) from Xenopus tropicalis (Western clawed frog).